The sequence spans 156 residues: Cyanate hydratase (156 aa).

Active-site residues include R96, E99, and S122.

It belongs to the cyanase family.

It catalyses the reaction cyanate + hydrogencarbonate + 3 H(+) = NH4(+) + 2 CO2. Functionally, catalyzes the reaction of cyanate with bicarbonate to produce ammonia and carbon dioxide. In Serratia proteamaculans (strain 568), this protein is Cyanate hydratase.